The chain runs to 479 residues: Sulfate adenylyltransferase subunit 1 (479 aa).

The tr-type G domain occupies 25–239 (KSLLRFLTCG…EVLETVDIQR (215 aa)). A G1 region spans residues 34-41 (GSVDDGKS). 34 to 41 (GSVDDGKS) contacts GTP. The segment at 92–96 (GITID) is G2. A G3 region spans residues 113-116 (DTPG). Residues 113-117 (DTPGH) and 168-171 (NKMD) contribute to the GTP site. Residues 168–171 (NKMD) form a G4 region. Positions 206–208 (SAL) are G5.

The protein belongs to the TRAFAC class translation factor GTPase superfamily. Classic translation factor GTPase family. CysN/NodQ subfamily. In terms of assembly, heterodimer composed of CysD, the smaller subunit, and CysN.

The enzyme catalyses sulfate + ATP + H(+) = adenosine 5'-phosphosulfate + diphosphate. It participates in sulfur metabolism; hydrogen sulfide biosynthesis; sulfite from sulfate: step 1/3. With CysD forms the ATP sulfurylase (ATPS) that catalyzes the adenylation of sulfate producing adenosine 5'-phosphosulfate (APS) and diphosphate, the first enzymatic step in sulfur assimilation pathway. APS synthesis involves the formation of a high-energy phosphoric-sulfuric acid anhydride bond driven by GTP hydrolysis by CysN coupled to ATP hydrolysis by CysD. The protein is Sulfate adenylyltransferase subunit 1 of Salmonella dublin (strain CT_02021853).